Consider the following 238-residue polypeptide: Leucine-rich repeat-containing protein 57 (238 aa).

8 LRR repeats span residues Leu-10–Leu-36, Thr-37–His-62, Lys-64–Lys-82, Leu-83–Leu-106, Ser-108–Thr-128, Leu-129–Leu-152, Ala-154–Arg-173, and Thr-174–Asp-199.

The chain is Leucine-rich repeat-containing protein 57 (lrrc57) from Danio rerio (Zebrafish).